The primary structure comprises 638 residues: Exocyst complex component EXO70A1 (638 aa).

Positions 163 to 190 (FDGLPNSLRPSSDGDGGGKPHGGHHNDD) are disordered.

This sequence belongs to the EXO70 family. The exocyst complex is composed of SEC3, SEC5, SEC6, SEC8, SEC10, EXO70A1 and EXO84B. Interacts with SEC3A and EXO84B. Co-localizes with FPP3/VETH1, FPP2/VETH2 and COG2 in vesicle-like small motile compartments. May interact with COG2.

It is found in the cytoplasm. The protein resides in the cytosol. Its subcellular location is the cytoskeleton. The protein localises to the phragmoplast. It localises to the cell membrane. It is found in the secreted. The protein resides in the cell wall. Its function is as follows. Component of the exocyst complex involved in the docking of exocytic vesicles with fusion sites on the plasma membrane during regulated or polarized secretion. Involved in polarized cell growth and organ morphogenesis. Involved in polarized cell growth and organ morphogenesis. During cytokinesis, involved in cell plate initiation, cell plate maturation and formation of new primary cell wall. Participates in polarized pectin delivery required for the polarized development of the mucilage-producing volcano cells of the seed coat. Involved in the recycling and localization of auxin efflux carriers PIN1 and PIN2, and thus in polar auxin transport regulation. Functions in vesicle trafficking in tracheary elements to regulate patterned secondary cell wall (SCW) thickening. The chain is Exocyst complex component EXO70A1 from Arabidopsis thaliana (Mouse-ear cress).